Consider the following 317-residue polypeptide: Melanocyte-stimulating hormone receptor (317 aa).

Over 1 to 37 (MVWQGPQRRLLGSLNGTSPATPHFELAANQTGPRCLE) the chain is Extracellular. N-linked (GlcNAc...) asparagine glycosylation is found at asparagine 15 and asparagine 29. A helical transmembrane segment spans residues 38 to 63 (VSIPNGLFLSLGLVSVVENVLVVAAI). The Cytoplasmic segment spans residues 64–72 (AKNRNLHSP). A helical membrane pass occupies residues 73–93 (MYYFIGCLAVSDLLVSVTNVL). The Extracellular segment spans residues 94-118 (ETAVMLLVEAGALAAQAAVVQQLDD). Residues 119–140 (IIDVLICGSMVSSLCFLGAIAV) traverse the membrane as a helical segment. The Cytoplasmic portion of the chain corresponds to 141–163 (DRYLSIFYALRYHSIVTLPRAWR). A helical membrane pass occupies residues 164-183 (AISAIWVASVLSSTLFIAYY). The Extracellular segment spans residues 184–191 (NHTAVLLC). A helical membrane pass occupies residues 192 to 211 (LVSFFVAMLVLMAVLYVHML). Over 212–240 (ARARQHARGIARLRKRQHSVHQGFGLKGA) the chain is Cytoplasmic. Residues 241 to 266 (ATLTILLGIFFLCWGPFFLHLSLMVL) traverse the membrane as a helical segment. Residues 267 to 279 (CPQHPICGCVFQN) are Extracellular-facing. Residues 280–300 (FNLFLTLIICNSIIDPFIYAF) form a helical membrane-spanning segment. Topologically, residues 301-317 (RSQELRKTLQEVVLCSW) are cytoplasmic. Cysteine 315 is lipidated: S-palmitoyl cysteine.

Belongs to the G-protein coupled receptor 1 family. As to quaternary structure, interacts with MGRN1, but does not undergo MGRN1-mediated ubiquitination; this interaction competes with GNAS-binding and thus inhibits agonist-induced cAMP production. Interacts with OPN3; the interaction results in a decrease in MC1R-mediated cAMP signaling and ultimately a decrease in melanin production in melanocytes.

It localises to the cell membrane. In terms of biological role, receptor for MSH (alpha, beta and gamma) and ACTH. The activity of this receptor is mediated by G proteins which activate adenylate cyclase. Mediates melanogenesis, the production of eumelanin (black/brown) and phaeomelanin (red/yellow), via regulation of cAMP signaling in melanocytes. This chain is Melanocyte-stimulating hormone receptor (MC1R), found in Canis lupus familiaris (Dog).